We begin with the raw amino-acid sequence, 254 residues long: 3-deoxy-manno-octulosonate cytidylyltransferase (254 aa).

The protein belongs to the KdsB family.

It localises to the cytoplasm. It carries out the reaction 3-deoxy-alpha-D-manno-oct-2-ulosonate + CTP = CMP-3-deoxy-beta-D-manno-octulosonate + diphosphate. It functions in the pathway nucleotide-sugar biosynthesis; CMP-3-deoxy-D-manno-octulosonate biosynthesis; CMP-3-deoxy-D-manno-octulosonate from 3-deoxy-D-manno-octulosonate and CTP: step 1/1. Its pathway is bacterial outer membrane biogenesis; lipopolysaccharide biosynthesis. Its function is as follows. Activates KDO (a required 8-carbon sugar) for incorporation into bacterial lipopolysaccharide in Gram-negative bacteria. The sequence is that of 3-deoxy-manno-octulosonate cytidylyltransferase from Pseudomonas fluorescens (strain SBW25).